A 329-amino-acid polypeptide reads, in one-letter code: MTWRDEIARRVRGEHLRDAPLAPRTAVRVGGPADLLCRPADGDALSALLGAVRELGVPLSVLGGGANTLVADAGVRGVVLRLPQDFPGESTDGDTLVLSAGAPIARLPARAHAHGLVGMEFLGGIPGTLGGAAAMNAGTRLGEMKDVVTRLELATADGAGFVPAAALGYAYRTCRLPPGAVVARVEVRLRPGDVAASEALMREDRERRRATQPLDRPTFGSTFTNPPGEYAGRLIEAVGLKGHRVGGAVWSPVHANFVTNLGGATARDVLALIRLARARVKERFGIALETEVRLMGEFPPDELAGLDGHAADGGGPGAASGGARPREAT.

One can recognise an FAD-binding PCMH-type domain in the interval 28–192; the sequence is RVGGPADLLC…ARVEVRLRPG (165 aa). Residue R172 is part of the active site. Positions 204–225 are disordered; it reads DRERRRATQPLDRPTFGSTFTN. Residue S221 is the Proton donor of the active site. The active site involves E291. Positions 303-329 are disordered; sequence LAGLDGHAADGGGPGAASGGARPREAT. Residues 311-320 are compositionally biased toward gly residues; that stretch reads ADGGGPGAAS.

The protein belongs to the MurB family. It depends on FAD as a cofactor.

It localises to the cytoplasm. It catalyses the reaction UDP-N-acetyl-alpha-D-muramate + NADP(+) = UDP-N-acetyl-3-O-(1-carboxyvinyl)-alpha-D-glucosamine + NADPH + H(+). The protein operates within cell wall biogenesis; peptidoglycan biosynthesis. In terms of biological role, cell wall formation. In Anaeromyxobacter dehalogenans (strain 2CP-C), this protein is UDP-N-acetylenolpyruvoylglucosamine reductase.